The sequence spans 523 residues: Sensory neuron membrane protein 1 (523 aa).

Topologically, residues 1–11 (MQLPRELKYAA) are cytoplasmic. The chain crosses the membrane as a helical span at residues 12–32 (IAGGVALFGLIFGWVLFPTIL). At 33–458 (KSQLKKEMAL…HQLFIPKRVV (426 aa)) the chain is on the extracellular side. Residues Asn-67 and Asn-229 are each glycosylated (N-linked (GlcNAc...) asparagine). Intrachain disulfides connect Cys-268–Cys-333, Cys-297–Cys-352, and Cys-335–Cys-341. An N-linked (GlcNAc...) asparagine glycan is attached at Asn-440. The helical transmembrane segment at 459-479 (GVLRWWMVSFGSLGAVIGIVF) threads the bilayer. The Cytoplasmic segment spans residues 480-523 (HFRDHIMRLAVSGDTKVSKVTPEEEEQKDISVIGQAQEPAKVNI).

This sequence belongs to the CD36 family.

It is found in the cell membrane. Its function is as follows. Plays an olfactory role that is not restricted to pheromone sensitivity. The chain is Sensory neuron membrane protein 1 from Helicoverpa armigera (Cotton bollworm).